A 371-amino-acid chain; its full sequence is DNA replication and repair protein RecF (371 aa).

G30 to T37 provides a ligand contact to ATP.

This sequence belongs to the RecF family.

It is found in the cytoplasm. Its function is as follows. The RecF protein is involved in DNA metabolism; it is required for DNA replication and normal SOS inducibility. RecF binds preferentially to single-stranded, linear DNA. It also seems to bind ATP. The chain is DNA replication and repair protein RecF from Staphylococcus epidermidis (strain ATCC 12228 / FDA PCI 1200).